Reading from the N-terminus, the 199-residue chain is UPF0301 protein Rfer_1377 (199 aa).

Belongs to the UPF0301 (AlgH) family.

This chain is UPF0301 protein Rfer_1377, found in Albidiferax ferrireducens (strain ATCC BAA-621 / DSM 15236 / T118) (Rhodoferax ferrireducens).